Here is a 260-residue protein sequence, read N- to C-terminus: Cytochrome c oxidase subunit 2 (260 aa).

Residues 1 to 41 (MIVREWLFFTMAPCDAAEPWQLGFQDAATPMMQGIIDLHHD) are Mitochondrial intermembrane-facing. Residues 42 to 58 (IFFFLILILVFVSWILV) traverse the membrane as a helical segment. Residues 59 to 82 (RALWHFHYKKNPIPQRIVHGTTIE) are Mitochondrial matrix-facing. A helical membrane pass occupies residues 83-104 (IIRTIFPSIILMFIAIPSFALL). The Mitochondrial intermembrane segment spans residues 105–260 (YSMDEVVVDP…NQLIPQTGEA (156 aa)). Cu cation-binding residues include histidine 187, cysteine 222, glutamate 224, cysteine 226, histidine 230, and methionine 233. Glutamate 224 contributes to the Mg(2+) binding site.

This sequence belongs to the cytochrome c oxidase subunit 2 family. Component of the cytochrome c oxidase (complex IV, CIV), a multisubunit enzyme composed of a catalytic core of 3 subunits and several supernumerary subunits. The complex exists as a monomer or a dimer and forms supercomplexes (SCs) in the inner mitochondrial membrane with ubiquinol-cytochrome c oxidoreductase (cytochrome b-c1 complex, complex III, CIII). It depends on Cu cation as a cofactor.

The protein resides in the mitochondrion inner membrane. The enzyme catalyses 4 Fe(II)-[cytochrome c] + O2 + 8 H(+)(in) = 4 Fe(III)-[cytochrome c] + 2 H2O + 4 H(+)(out). Its function is as follows. Component of the cytochrome c oxidase, the last enzyme in the mitochondrial electron transport chain which drives oxidative phosphorylation. The respiratory chain contains 3 multisubunit complexes succinate dehydrogenase (complex II, CII), ubiquinol-cytochrome c oxidoreductase (cytochrome b-c1 complex, complex III, CIII) and cytochrome c oxidase (complex IV, CIV), that cooperate to transfer electrons derived from NADH and succinate to molecular oxygen, creating an electrochemical gradient over the inner membrane that drives transmembrane transport and the ATP synthase. Cytochrome c oxidase is the component of the respiratory chain that catalyzes the reduction of oxygen to water. Electrons originating from reduced cytochrome c in the intermembrane space (IMS) are transferred via the dinuclear copper A center (CU(A)) of subunit 2 and heme A of subunit 1 to the active site in subunit 1, a binuclear center (BNC) formed by heme A3 and copper B (CU(B)). The BNC reduces molecular oxygen to 2 water molecules using 4 electrons from cytochrome c in the IMS and 4 protons from the mitochondrial matrix. The chain is Cytochrome c oxidase subunit 2 (COX2) from Beta vulgaris (Sugar beet).